The sequence spans 891 residues: MATQIDASSEAAAATAAAQHTPMMQQYLRIKSEHPDTLVFYRMGDFYELFFEDAEKAARLLDLTLTQRGASAGTPIKMAGVPHHAVEQYLAKLVKFGESAAICEQIGDPATSKGPVERKVVRVVTPGTLTDAALLSDKSDVFLLALCVGHNKRGVASNIGLAWLNLASGALRLAELAPDQLGAALERIRPAEILAADGTIESVPAGMGAITRVPAWHFDIASGTQRLCDQLEVASLDGFGAQALTSANGAAGALLIYAAATQGQQLRHVRSLKVENESEYIGLDPSTRRNLELTETLRGTESPTLYSLLDTCCTAMGSRLLRHWLHHPPRASVAAQARHQAIGALLDAPPNAGLDSLRSALRQIADVERITGRLALLSARPRDLSSLRDTFAALPALRERVAEIASNAAALGRLGAALEPPPGCLDLLTRAIAAEPAAMVRDGGVIARGYDAELDELRDISENCGQFLIDLETRERARTGISNLRVEYNKVHGFYIEVTRGQTDKVPDDYRRRQTLKNAERYITPELKTFEDKALSAQERALARERALYDGVLQALLPHIEGCQRVASGLAELDLLAAFAERARTLDWVAPEFTDEIGIEIDQGRHPVVEAQVEQFIANDCALNPERKLLLITGPNMGGKSTFMRQTALIALMAYVGSYVPAKAARFGPIDRIFTRIGAADDLAGGRSTFMVEMTEAAAILNDATPHSLVLMDEIGRGTSTFDGLALAWAIARHLLSHNRCYTLFATHYFELTQLPAEFPQAANVHLSAVEHGHGIVFLHAVEEGPANQSYGLQVAQLAGVPAPVIRAARKHLAHLEQQSAAQATPQLDLFAAPTVVDEPECNEPPAAATPHPALERLLELDPDDLKPRDALDLLYELHTLARSGPADAQR.

Position 634–641 (634–641) interacts with ATP; that stretch reads GPNMGGKS.

This sequence belongs to the DNA mismatch repair MutS family.

Functionally, this protein is involved in the repair of mismatches in DNA. It is possible that it carries out the mismatch recognition step. This protein has a weak ATPase activity. This is DNA mismatch repair protein MutS from Burkholderia pseudomallei (strain 668).